The following is a 354-amino-acid chain: MSEPNVRASFADNRRPLSKTKGQLLNMPPVITTALYTAFPVIFLLDKVLAFLTWTNDDPYTNFIAIAIYIMVVKYWTVVACTVLPTIIALGTCASLWFLKTTIDDLRSETAPPTIEEIIDTLINMQARFSYIVEPFSYFGSLSGSDYFNLGFSLIAITPCYIWLMTRIFTVRSFLLVFGVAWLSFHSSWSVATRHLLWRSIVIRKILTFTTGLKFSLVDKNIELTVLNDFQISNVGTGKTVEFHILQNQRRWLGVGWSNTLLPFERGPFTTEDLEKSWDSLESFQFPEITQATCRWRWLDANWKTDDSFAPGEGWIYYNNSWEEPSNTDSLTRFTRTKRWKRRALVIVEDDGTT.

The next 5 helical transmembrane spans lie at 24–44 (LLNM…VIFL), 63–83 (FIAI…ACTV), 84–104 (LPTI…TTID), 151–171 (GFSL…IFTV), and 173–193 (SFLL…SVAT). N-linked (GlcNAc...) asparagine glycosylation occurs at Asn-319.

This sequence belongs to the PEX28-32 family. PEX30/31 subfamily.

It localises to the peroxisome membrane. The protein resides in the endoplasmic reticulum membrane. In terms of biological role, with PEX24, contributes to tethering of peroxisomes to the endoplasmic reticulum for organelle biogenesis, positioning and segregation. This chain is Peroxisomal membrane protein PEX32, found in Ogataea parapolymorpha (strain ATCC 26012 / BCRC 20466 / JCM 22074 / NRRL Y-7560 / DL-1) (Yeast).